The following is a 588-amino-acid chain: Secreted triacylglycerol lipase LIP1 (588 aa).

Residues 1 to 20 form the signal peptide; that stretch reads MRFSGFVSGLGLGLLTAVSA. The active-site Acyl-ester intermediate is serine 258. Asparagine 400 carries N-linked (GlcNAc...) asparagine glycosylation.

The protein belongs to the type-B carboxylesterase/lipase family.

The protein resides in the secreted. The enzyme catalyses a triacylglycerol + H2O = a diacylglycerol + a fatty acid + H(+). Its function is as follows. Secreted acylglycerol lipase required for efficient utilization of saturated triglyceride lipids. Is not involved in virulence. The polypeptide is Secreted triacylglycerol lipase LIP1 (Gibberella zeae (strain ATCC MYA-4620 / CBS 123657 / FGSC 9075 / NRRL 31084 / PH-1) (Wheat head blight fungus)).